A 586-amino-acid chain; its full sequence is Kelch-like protein 7 (586 aa).

In terms of domain architecture, BTB spans 44–111; the sequence is CDVILMVQER…AYTARISVNS (68 aa). The 103-residue stretch at 146–248 folds into the BACK domain; that stretch reads CLGISVLAEC…SKNFLSKTVQ (103 aa). Kelch repeat units lie at residues 294-336, 337-382, 383-430, 431-481, 483-528, and 530-575; these read RIAL…FWDN, VVYI…AAEG, KIYT…EANG, LIYV…FVKD, IFAV…AVGS, and IYVL…CVVD.

In terms of assembly, homodimer. Component of the BCR(KLHL7) E3 ubiquitin ligase complex, at least composed of CUL3 and KLHL7 and RBX1.

The protein localises to the nucleus. It is found in the cytoplasm. Its pathway is protein modification; protein ubiquitination. Functionally, substrate-specific adapter of a BCR (BTB-CUL3-RBX1) E3 ubiquitin ligase complex. The BCR(KLHL7) complex acts by mediating ubiquitination and subsequent degradation of substrate proteins. Probably mediates 'Lys-48'-linked ubiquitination. This chain is Kelch-like protein 7 (Klhl7), found in Rattus norvegicus (Rat).